Here is a 330-residue protein sequence, read N- to C-terminus: Phosphate acyltransferase (330 aa).

This sequence belongs to the PlsX family. As to quaternary structure, homodimer. Probably interacts with PlsY.

It is found in the cytoplasm. The enzyme catalyses a fatty acyl-[ACP] + phosphate = an acyl phosphate + holo-[ACP]. The protein operates within lipid metabolism; phospholipid metabolism. Catalyzes the reversible formation of acyl-phosphate (acyl-PO(4)) from acyl-[acyl-carrier-protein] (acyl-ACP). This enzyme utilizes acyl-ACP as fatty acyl donor, but not acyl-CoA. The chain is Phosphate acyltransferase from Carboxydothermus hydrogenoformans (strain ATCC BAA-161 / DSM 6008 / Z-2901).